The chain runs to 314 residues: Putative S-adenosyl-L-methionine-dependent methyltransferase MAV_4441 (314 aa).

S-adenosyl-L-methionine-binding positions include aspartate 138 and 167-168; that span reads DL.

This sequence belongs to the UPF0677 family.

Exhibits S-adenosyl-L-methionine-dependent methyltransferase activity. The protein is Putative S-adenosyl-L-methionine-dependent methyltransferase MAV_4441 of Mycobacterium avium (strain 104).